We begin with the raw amino-acid sequence, 387 residues long: Succinate--CoA ligase [ADP-forming] subunit beta (387 aa).

An ATP-grasp domain is found at 9–243; that stretch reads KEILSTYGIP…YSQLDPLEIT (235 aa). Residues lysine 45, 52 to 54, glutamate 98, valine 101, and glutamate 106 each bind ATP; that span reads GRG. Mg(2+) is bound by residues asparagine 198 and aspartate 212. Substrate contacts are provided by residues asparagine 263 and 320–322; that span reads GIM.

It belongs to the succinate/malate CoA ligase beta subunit family. In terms of assembly, heterotetramer of two alpha and two beta subunits. Mg(2+) is required as a cofactor.

The enzyme catalyses succinate + ATP + CoA = succinyl-CoA + ADP + phosphate. The catalysed reaction is GTP + succinate + CoA = succinyl-CoA + GDP + phosphate. The protein operates within carbohydrate metabolism; tricarboxylic acid cycle; succinate from succinyl-CoA (ligase route): step 1/1. In terms of biological role, succinyl-CoA synthetase functions in the citric acid cycle (TCA), coupling the hydrolysis of succinyl-CoA to the synthesis of either ATP or GTP and thus represents the only step of substrate-level phosphorylation in the TCA. The beta subunit provides nucleotide specificity of the enzyme and binds the substrate succinate, while the binding sites for coenzyme A and phosphate are found in the alpha subunit. This chain is Succinate--CoA ligase [ADP-forming] subunit beta, found in Trichlorobacter lovleyi (strain ATCC BAA-1151 / DSM 17278 / SZ) (Geobacter lovleyi).